We begin with the raw amino-acid sequence, 254 residues long: DNA-3-methyladenine glycosylase (254 aa).

Positions 1–10 (MKTPARRSKR) are enriched in basic residues. The segment at 1–20 (MKTPARRSKRVNQEESETNV) is disordered.

Belongs to the DNA glycosylase MPG family.

The protein localises to the nucleus. The enzyme catalyses Hydrolysis of alkylated DNA, releasing 3-methyladenine, 3-methylguanine, 7-methylguanine and 7-methyladenine.. Its function is as follows. Hydrolysis of the deoxyribose N-glycosidic bond to excise 3-methyladenine, and 7-methylguanine from the damaged DNA polymer formed by alkylation lesions. The polypeptide is DNA-3-methyladenine glycosylase (MAG) (Arabidopsis thaliana (Mouse-ear cress)).